Here is a 105-residue protein sequence, read N- to C-terminus: Met repressor (105 aa).

This sequence belongs to the MetJ family. As to quaternary structure, homodimer.

The protein localises to the cytoplasm. Functionally, this regulatory protein, when combined with SAM (S-adenosylmethionine) represses the expression of the methionine regulon and of enzymes involved in SAM synthesis. This is Met repressor from Actinobacillus pleuropneumoniae serotype 7 (strain AP76).